A 249-amino-acid chain; its full sequence is tRNA (guanine-N(1)-)-methyltransferase (249 aa).

S-adenosyl-L-methionine contacts are provided by residues Gly121 and 141-146 (LGDFVL).

Belongs to the RNA methyltransferase TrmD family. In terms of assembly, homodimer.

Its subcellular location is the cytoplasm. The catalysed reaction is guanosine(37) in tRNA + S-adenosyl-L-methionine = N(1)-methylguanosine(37) in tRNA + S-adenosyl-L-homocysteine + H(+). Specifically methylates guanosine-37 in various tRNAs. This is tRNA (guanine-N(1)-)-methyltransferase from Cereibacter sphaeroides (strain ATCC 17023 / DSM 158 / JCM 6121 / CCUG 31486 / LMG 2827 / NBRC 12203 / NCIMB 8253 / ATH 2.4.1.) (Rhodobacter sphaeroides).